The sequence spans 165 residues: Crossover junction endodeoxyribonuclease RuvC (165 aa).

Catalysis depends on residues Asp-8, Glu-67, and Asp-139. Asp-8, Glu-67, and Asp-139 together coordinate Mg(2+).

This sequence belongs to the RuvC family. Homodimer which binds Holliday junction (HJ) DNA. The HJ becomes 2-fold symmetrical on binding to RuvC with unstacked arms; it has a different conformation from HJ DNA in complex with RuvA. In the full resolvosome a probable DNA-RuvA(4)-RuvB(12)-RuvC(2) complex forms which resolves the HJ. Mg(2+) serves as cofactor.

Its subcellular location is the cytoplasm. It carries out the reaction Endonucleolytic cleavage at a junction such as a reciprocal single-stranded crossover between two homologous DNA duplexes (Holliday junction).. Functionally, the RuvA-RuvB-RuvC complex processes Holliday junction (HJ) DNA during genetic recombination and DNA repair. Endonuclease that resolves HJ intermediates. Cleaves cruciform DNA by making single-stranded nicks across the HJ at symmetrical positions within the homologous arms, yielding a 5'-phosphate and a 3'-hydroxyl group; requires a central core of homology in the junction. The consensus cleavage sequence is 5'-(A/T)TT(C/G)-3'. Cleavage occurs on the 3'-side of the TT dinucleotide at the point of strand exchange. HJ branch migration catalyzed by RuvA-RuvB allows RuvC to scan DNA until it finds its consensus sequence, where it cleaves and resolves the cruciform DNA. In Alkalilimnicola ehrlichii (strain ATCC BAA-1101 / DSM 17681 / MLHE-1), this protein is Crossover junction endodeoxyribonuclease RuvC.